The following is a 212-amino-acid chain: Adenylate kinase (212 aa).

10–15 contributes to the ATP binding site; the sequence is GAGKGT. The interval 30–59 is NMP; sequence STGDMFRAAMANQTEMGVLAKSYIDKGELV. AMP-binding positions include Thr-31, Arg-36, 57–59, 86–89, and Gln-93; these read ELV and GYPR. Positions 127 to 159 are LID; it reads GRIIHRVTGETFHKVFNPPVDYKEEDYYQREDD. ATP contacts are provided by residues Arg-128 and 137–138; that span reads TF. Arg-156 and Arg-167 together coordinate AMP. Gln-195 contacts ATP.

Belongs to the adenylate kinase family. Monomer.

It localises to the cytoplasm. The catalysed reaction is AMP + ATP = 2 ADP. Its pathway is purine metabolism; AMP biosynthesis via salvage pathway; AMP from ADP: step 1/1. Its function is as follows. Catalyzes the reversible transfer of the terminal phosphate group between ATP and AMP. Plays an important role in cellular energy homeostasis and in adenine nucleotide metabolism. This Streptococcus pneumoniae (strain JJA) protein is Adenylate kinase.